The primary structure comprises 761 residues: Phosphoribosylformylglycinamidine synthase subunit PurL (761 aa).

Residue His49 is part of the active site. Positions 52 and 92 each coordinate ATP. Glu94 contributes to the Mg(2+) binding site. Residues 95 to 98 (SHNH) and Arg117 each bind substrate. His96 serves as the catalytic Proton acceptor. Asp118 contacts Mg(2+). Gln241 is a binding site for substrate. A Mg(2+)-binding site is contributed by Asp269. 318-320 (ESQ) contributes to the substrate binding site. ATP contacts are provided by Asn502 and Gly539. Asn540 contributes to the Mg(2+) binding site. Ser542 contributes to the substrate binding site.

The protein belongs to the FGAMS family. Monomer. Part of the FGAM synthase complex composed of 1 PurL, 1 PurQ and 2 PurS subunits.

It localises to the cytoplasm. It catalyses the reaction N(2)-formyl-N(1)-(5-phospho-beta-D-ribosyl)glycinamide + L-glutamine + ATP + H2O = 2-formamido-N(1)-(5-O-phospho-beta-D-ribosyl)acetamidine + L-glutamate + ADP + phosphate + H(+). It participates in purine metabolism; IMP biosynthesis via de novo pathway; 5-amino-1-(5-phospho-D-ribosyl)imidazole from N(2)-formyl-N(1)-(5-phospho-D-ribosyl)glycinamide: step 1/2. Part of the phosphoribosylformylglycinamidine synthase complex involved in the purines biosynthetic pathway. Catalyzes the ATP-dependent conversion of formylglycinamide ribonucleotide (FGAR) and glutamine to yield formylglycinamidine ribonucleotide (FGAM) and glutamate. The FGAM synthase complex is composed of three subunits. PurQ produces an ammonia molecule by converting glutamine to glutamate. PurL transfers the ammonia molecule to FGAR to form FGAM in an ATP-dependent manner. PurS interacts with PurQ and PurL and is thought to assist in the transfer of the ammonia molecule from PurQ to PurL. The sequence is that of Phosphoribosylformylglycinamidine synthase subunit PurL from Chlorobium chlorochromatii (strain CaD3).